Here is a 273-residue protein sequence, read N- to C-terminus: ATP synthase subunit a (273 aa).

Transmembrane regions (helical) follow at residues Trp44 to Tyr64, Ile104 to Ile124, Asp149 to Ile169, Leu223 to Trp243, and Ala244 to Val264.

It belongs to the ATPase A chain family. F-type ATPases have 2 components, CF(1) - the catalytic core - and CF(0) - the membrane proton channel. CF(1) has five subunits: alpha(3), beta(3), gamma(1), delta(1), epsilon(1). CF(0) has three main subunits: a(1), b(2) and c(9-12). The alpha and beta chains form an alternating ring which encloses part of the gamma chain. CF(1) is attached to CF(0) by a central stalk formed by the gamma and epsilon chains, while a peripheral stalk is formed by the delta and b chains.

The protein localises to the cell inner membrane. Key component of the proton channel; it plays a direct role in the translocation of protons across the membrane. The protein is ATP synthase subunit a of Shewanella putrefaciens (strain CN-32 / ATCC BAA-453).